The primary structure comprises 335 residues: MLNTVIVGASGYAGAELAALVQNHPQLKLFGLYVSAGSQDAHKRFSSLHPQWVGALDQPLLPLDEDGMTRILTQADLVLLATAHEVSATLAPKFLAKGLPVFDLSGAFRVRDQQFYASYYGFTHDSEQWLDQAAYGLAEWNAEAVKAAQLIAVPGCYPTASLCALKPLQQAGLIAKGWQPIINAVSGVSGAGRKAAINTSFCEVSLNPYGTFNHRHQPEISHHLGKEVLFQPHLGNYVRGILATIYVQLADGVTPTQVDQAYLKAYEGKPLVRLTGQMPSIRGVAGTPYCDLAWQQQGNMLVVVCAIDNLLKGAASQAMQCINIKFGFEPATGLI.

Cys-156 is a catalytic residue.

It belongs to the NAGSA dehydrogenase family. Type 1 subfamily.

It is found in the cytoplasm. It carries out the reaction N-acetyl-L-glutamate 5-semialdehyde + phosphate + NADP(+) = N-acetyl-L-glutamyl 5-phosphate + NADPH + H(+). It participates in amino-acid biosynthesis; L-arginine biosynthesis; N(2)-acetyl-L-ornithine from L-glutamate: step 3/4. Functionally, catalyzes the NADPH-dependent reduction of N-acetyl-5-glutamyl phosphate to yield N-acetyl-L-glutamate 5-semialdehyde. The sequence is that of N-acetyl-gamma-glutamyl-phosphate reductase from Aeromonas hydrophila subsp. hydrophila (strain ATCC 7966 / DSM 30187 / BCRC 13018 / CCUG 14551 / JCM 1027 / KCTC 2358 / NCIMB 9240 / NCTC 8049).